Consider the following 133-residue polypeptide: Small ribosomal subunit protein uS11 (133 aa).

This sequence belongs to the universal ribosomal protein uS11 family. Part of the 30S ribosomal subunit. Interacts with proteins S7 and S18. Binds to IF-3.

Located on the platform of the 30S subunit, it bridges several disparate RNA helices of the 16S rRNA. Forms part of the Shine-Dalgarno cleft in the 70S ribosome. The protein is Small ribosomal subunit protein uS11 of Cupriavidus metallidurans (strain ATCC 43123 / DSM 2839 / NBRC 102507 / CH34) (Ralstonia metallidurans).